The primary structure comprises 158 residues: NADH-quinone oxidoreductase subunit B (158 aa).

The [4Fe-4S] cluster site is built by Cys-37, Cys-38, Cys-102, and Cys-132.

The protein belongs to the complex I 20 kDa subunit family. In terms of assembly, NDH-1 is composed of 14 different subunits. Subunits NuoB, C, D, E, F, and G constitute the peripheral sector of the complex. It depends on [4Fe-4S] cluster as a cofactor.

The protein localises to the cell inner membrane. It catalyses the reaction a quinone + NADH + 5 H(+)(in) = a quinol + NAD(+) + 4 H(+)(out). Its function is as follows. NDH-1 shuttles electrons from NADH, via FMN and iron-sulfur (Fe-S) centers, to quinones in the respiratory chain. Couples the redox reaction to proton translocation (for every two electrons transferred, four hydrogen ions are translocated across the cytoplasmic membrane), and thus conserves the redox energy in a proton gradient. This is NADH-quinone oxidoreductase subunit B from Alkalilimnicola ehrlichii (strain ATCC BAA-1101 / DSM 17681 / MLHE-1).